We begin with the raw amino-acid sequence, 606 residues long: Proton myo-inositol cotransporter hmit-1.1 (606 aa).

Over 1–20 the chain is Cytoplasmic; that stretch reads MVAVAAFSSSGQDKPAHTPK. The helical transmembrane segment at 21–41 threads the bilayer; it reads LGLFVYILAAASVIGGFLFGY. The Extracellular segment spans residues 42 to 63; it reads DTSVVSAAMLYMPDAPGLKPMD. A helical membrane pass occupies residues 64–84; sequence TVWQEVLVSISPGMAAVGSLM. Over 85 to 96 the chain is Cytoplasmic; the sequence is SGTSSDYIGRRK. The helical transmembrane segment at 97 to 117 threads the bilayer; the sequence is VILGASAIFTIGALVCAASVN. Position 118 (lysine 118) is a topological domain, extracellular. Residues 119–139 traverse the membrane as a helical segment; the sequence is IMLLVGRVLLGIAIGFASMIV. Residues 140 to 152 are Cytoplasmic-facing; that stretch reads PVYLGETAPTHVR. Residues 153–173 traverse the membrane as a helical segment; the sequence is GMLVAAFALMISFGQVVANIT. The Extracellular portion of the chain corresponds to 174-188; the sequence is GGAFSYIDPYNVGWR. A helical transmembrane segment spans residues 189–209; sequence LMFAFAAVPSIIQFVCFMFLP. Residues 210–278 are Cytoplasmic-facing; that stretch reads ETPRWLYENG…RILKTPHVLK (69 aa). Residues 279-299 traverse the membrane as a helical segment; sequence ACFIGSMLQAFQQLAGINTIL. Residues 300–317 are Extracellular-facing; sequence YYTADIIRSSGISNNHTT. The N-linked (GlcNAc...) asparagine glycan is linked to asparagine 314. Residues 318 to 338 traverse the membrane as a helical segment; the sequence is IWISVLLSLCNFIGPFVPMSL. The Cytoplasmic portion of the chain corresponds to 339–345; sequence IEKVGRR. The helical transmembrane segment at 346–366 threads the bilayer; that stretch reads IIFLFSCGLVVLSLVFIGVAF. Over 367–464 the chain is Extracellular; sequence LLVNHDSAAT…EKYYCDTKYT (98 aa). 2 N-linked (GlcNAc...) asparagine glycosylation sites follow: asparagine 387 and asparagine 445. Residues 465-485 traverse the membrane as a helical segment; it reads LLPIIACGVYLLTFSSGFTSL. Over 486–501 the chain is Cytoplasmic; that stretch reads PWVLNSEFYPMWARST. A helical transmembrane segment spans residues 502–522; that stretch reads CVAISTTSNWVFNLIIALTYL. Over 523-531 the chain is Extracellular; that stretch reads SLTQVIGKY. Residues 532 to 552 form a helical membrane-spanning segment; that stretch reads GAFWLYAGLTVIAFIFILFLV. Residues 553 to 606 are Cytoplasmic-facing; it reads PETKGYSIEEVEMLFMNKKQRREAESRRRETVTEVRSRMNSTVSFGQHNEVHKY.

Belongs to the major facilitator superfamily. Sugar transporter (TC 2.A.1.1) family. Expressed in the intestine.

Its subcellular location is the cell membrane. It catalyses the reaction myo-inositol(out) + H(+)(out) = myo-inositol(in) + H(+)(in). Its function is as follows. H(+)-myo-inositol cotransporter. Probably by promoting the transport of myo-inositol regulates intracellular osmosis in response to hyperosmotic stress. This Caenorhabditis elegans protein is Proton myo-inositol cotransporter hmit-1.1.